A 228-amino-acid chain; its full sequence is MIDKSAATLTEALSQIHDGATILIGGFGTAGQPAELIDGLIELGRKNLTIVSNNAGNGDYGLAKLLKTGAVKKIICSFPRQADSYVFDELYRAGKIELEIVPQGNLACRIQAAGMGLGPIYTPTGFGTLLAEGKPTLNFDGKDYVLENPIKADFALIKAYKGDRWGNLVYRKSARNFGPIMAMAANVTIAQVSEVVALGELDPENVVTPGIFVQHVVPVQSTPASAAP.

25–31 (GGFGTAG) serves as a coordination point for CoA.

This sequence belongs to the 3-oxoacid CoA-transferase subunit A family. In terms of assembly, heterodimer.

The enzyme catalyses 3-oxoadipate + succinyl-CoA = 3-oxoadipyl-CoA + succinate. Its pathway is aromatic compound metabolism; beta-ketoadipate pathway; acetyl-CoA and succinyl-CoA from 3-oxoadipate: step 1/2. The polypeptide is 3-oxoadipate CoA-transferase subunit A (pcaI) (Acinetobacter baylyi (strain ATCC 33305 / BD413 / ADP1)).